The primary structure comprises 379 residues: Protein trichome birefringence-like 36 (379 aa).

A helical; Signal-anchor for type II membrane protein membrane pass occupies residues valine 8–glutamine 24. The short motif at glycine 123–serine 125 is the GDS motif element. Positions aspartate 353–asparagine 367 match the DCXHWCLPGXXDXWN motif motif.

The protein belongs to the PC-esterase family. TBL subfamily.

The protein resides in the membrane. Its function is as follows. May act as a bridging protein that binds pectin and other cell wall polysaccharides. Probably involved in maintaining esterification of pectins. May be involved in the specific O-acetylation of cell wall polymers. This Arabidopsis thaliana (Mouse-ear cress) protein is Protein trichome birefringence-like 36 (TBL36).